Reading from the N-terminus, the 152-residue chain is Small ribosomal subunit protein uS15 (152 aa).

The protein belongs to the universal ribosomal protein uS15 family. As to quaternary structure, part of the 30S ribosomal subunit.

The polypeptide is Small ribosomal subunit protein uS15 (Methanocorpusculum labreanum (strain ATCC 43576 / DSM 4855 / Z)).